Here is a 237-residue protein sequence, read N- to C-terminus: Ribosomal RNA small subunit methyltransferase G (237 aa).

Residues G78, F83, 129–130 (AE), and R148 contribute to the S-adenosyl-L-methionine site.

Belongs to the methyltransferase superfamily. RNA methyltransferase RsmG family.

The protein resides in the cytoplasm. Functionally, specifically methylates the N7 position of a guanine in 16S rRNA. This chain is Ribosomal RNA small subunit methyltransferase G, found in Streptococcus pyogenes serotype M6 (strain ATCC BAA-946 / MGAS10394).